A 213-amino-acid chain; its full sequence is Adenylate kinase (213 aa).

10 to 15 is a binding site for ATP; the sequence is GSGKGS. An NMP region spans residues 30–60; the sequence is STGNLFRAILKEDSELARKIKEINVSGGKLV. AMP-binding positions include T31, R36, 58–60, 87–90, and Q94; these read KLV and GYPR. Residues 123 to 160 are LID; the sequence is GRWMCPKCAGIYNIHFKKPQVHGLCDNDQATLYQRADD. R124 serves as a coordination point for ATP. Zn(2+)-binding residues include C127 and C130. 133–134 contacts ATP; that stretch reads IY. Zn(2+) is bound by residues C147 and D150. AMP is bound by residues R157 and R168. ATP is bound at residue Q196.

The protein belongs to the adenylate kinase family. In terms of assembly, monomer.

It is found in the cytoplasm. It catalyses the reaction AMP + ATP = 2 ADP. Its pathway is purine metabolism; AMP biosynthesis via salvage pathway; AMP from ADP: step 1/1. In terms of biological role, catalyzes the reversible transfer of the terminal phosphate group between ATP and AMP. Plays an important role in cellular energy homeostasis and in adenine nucleotide metabolism. In Ureaplasma parvum serovar 3 (strain ATCC 27815 / 27 / NCTC 11736), this protein is Adenylate kinase.